An 85-amino-acid chain; its full sequence is Putative membrane protein insertion efficiency factor (85 aa).

Belongs to the UPF0161 family.

It is found in the cell inner membrane. Its function is as follows. Could be involved in insertion of integral membrane proteins into the membrane. This is Putative membrane protein insertion efficiency factor from Vibrio cholerae serotype O1 (strain ATCC 39315 / El Tor Inaba N16961).